The primary structure comprises 563 residues: Delta-1-pyrroline-5-carboxylate dehydrogenase, mitochondrial (563 aa).

The transit peptide at 1 to 24 (MLLRSAALCRALLARRGRAAGLCR) directs the protein to the mitochondrion. Ser-44 carries the post-translational modification Phosphoserine. N6-acetyllysine is present on Lys-52. Lys-93, Lys-99, Lys-114, Lys-130, and Lys-175 each carry N6-acetyllysine; alternate. Residues Lys-93, Lys-99, Lys-114, Lys-130, and Lys-175 each carry the N6-succinyllysine; alternate modification. NAD(+) contacts are provided by residues Ser-208, Lys-233, and 286–290 (GSVPT). Glu-314 functions as the Proton acceptor in the catalytic mechanism. Lys-318 is modified (N6-acetyllysine). The residue at position 347 (Lys-347) is an N6-succinyllysine. Cys-348 functions as the Nucleophile in the catalytic mechanism. Lys-365 and Lys-376 each carry N6-acetyllysine. N6-succinyllysine is present on Lys-395. Glu-447 is an NAD(+) binding site. Residue Lys-509 is modified to N6-acetyllysine; alternate. At Lys-509 the chain carries N6-succinyllysine; alternate. Ser-513 lines the substrate pocket. The residue at position 531 (Lys-531) is an N6-acetyllysine.

This sequence belongs to the aldehyde dehydrogenase family. In terms of assembly, homodimer.

The protein resides in the mitochondrion matrix. It carries out the reaction L-glutamate 5-semialdehyde + NAD(+) + H2O = L-glutamate + NADH + 2 H(+). It participates in amino-acid degradation; L-proline degradation into L-glutamate; L-glutamate from L-proline: step 2/2. Its function is as follows. Irreversible conversion of delta-1-pyrroline-5-carboxylate (P5C), derived either from proline or ornithine, to glutamate. This is a necessary step in the pathway interconnecting the urea and tricarboxylic acid cycles. The preferred substrate is glutamic gamma-semialdehyde, other substrates include succinic, glutaric and adipic semialdehydes. The sequence is that of Delta-1-pyrroline-5-carboxylate dehydrogenase, mitochondrial (ALDH4A1) from Bos taurus (Bovine).